Here is a 303-residue protein sequence, read N- to C-terminus: Glycine--tRNA ligase alpha subunit (303 aa).

The protein belongs to the class-II aminoacyl-tRNA synthetase family. In terms of assembly, tetramer of two alpha and two beta subunits.

The protein resides in the cytoplasm. The enzyme catalyses tRNA(Gly) + glycine + ATP = glycyl-tRNA(Gly) + AMP + diphosphate. The chain is Glycine--tRNA ligase alpha subunit from Streptococcus equi subsp. zooepidemicus (strain H70).